Here is a 369-residue protein sequence, read N- to C-terminus: Chaperone protein DnaJ (369 aa).

A J domain is found at 5–69 (DYYDVLGISK…NKKAQYDRFG (65 aa)). The CR-type zinc-finger motif lies at 131–213 (GTTKNVSVDI…CSGAGRVKAK (83 aa)). Zn(2+) is bound by residues Cys-144, Cys-147, Cys-161, Cys-164, Cys-187, Cys-190, Cys-201, and Cys-204. 4 CXXCXGXG motif repeats span residues 144-151 (CGHCHGSG), 161-168 (CSKCHGQG), 187-194 (CPQCQGEG), and 201-208 (CHVCSGAG).

It belongs to the DnaJ family. As to quaternary structure, homodimer. It depends on Zn(2+) as a cofactor.

The protein localises to the cytoplasm. Participates actively in the response to hyperosmotic and heat shock by preventing the aggregation of stress-denatured proteins and by disaggregating proteins, also in an autonomous, DnaK-independent fashion. Unfolded proteins bind initially to DnaJ; upon interaction with the DnaJ-bound protein, DnaK hydrolyzes its bound ATP, resulting in the formation of a stable complex. GrpE releases ADP from DnaK; ATP binding to DnaK triggers the release of the substrate protein, thus completing the reaction cycle. Several rounds of ATP-dependent interactions between DnaJ, DnaK and GrpE are required for fully efficient folding. Also involved, together with DnaK and GrpE, in the DNA replication of plasmids through activation of initiation proteins. The polypeptide is Chaperone protein DnaJ (Acholeplasma laidlawii).